Here is a 696-residue protein sequence, read N- to C-terminus: Putative cyclic nucleotide-gated ion channel 13 (696 aa).

Over 1-81 the chain is Cytoplasmic; that stretch reads MAFGRNNRVR…QGSFLQNWNK (81 aa). Positions 45 to 65 are disordered; it reads KPLSFGSHNKKRDSNSSTTTQ. Residues 82-102 form a helical membrane-spanning segment; sequence IFLFASVIALAIDPLFFYIPI. Residues 103 to 116 lie on the Extracellular side of the membrane; it reads VDGERHCLNLHRNL. The chain crosses the membrane as a helical span at residues 117–137; it reads EIAASVLRTFIDAFYIIHIVF. At 138 to 170 the chain is on the cytoplasmic side; sequence QFRTAYISPSSRVFGRGELVDDPKAIAIKYLSS. A helical transmembrane segment spans residues 171–191; it reads YFIIDLLSILPLPQLVVLAVI. The Extracellular portion of the chain corresponds to 192–204; that stretch reads PNVNKPVSLITKD. The helical transmembrane segment at 205 to 225 threads the bilayer; sequence YLITVIFTQYIPRILRIYPLY. The Cytoplasmic portion of the chain corresponds to 226-243; that stretch reads TEVTRTSGIVTETAWAGA. Residues 244-264 form a helical membrane-spanning segment; it reads AWNLSLYMLASHVFGALWYLI. Topologically, residues 265-367 are extracellular; it reads SVEREDRCWR…GQNLNTSKFV (103 aa). A helical transmembrane segment spans residues 368-388; that stretch reads GEIIFAVSICISGLVLFALLI. The Cytoplasmic portion of the chain corresponds to 389-696; sequence GNMQKYLEST…SEPDFSLRNP (308 aa). A nucleoside 3',5'-cyclic phosphate is bound by residues 474 to 598 and glutamate 545; that span reads LFEI…SKQL. The interval 590 to 605 is calmodulin-binding; that stretch reads FRRLHSKQLQHTFRFY. The IQ domain maps to 610–639; it reads RTWGASFIQAAWRRHCRRKLARSLTEEEDR. The tract at residues 677-696 is disordered; that stretch reads NNLPLLPPKPSEPDFSLRNP.

Belongs to the cyclic nucleotide-gated cation channel (TC 1.A.1.5) family. Homotetramer or heterotetramer.

The protein localises to the cell membrane. Functionally, putative cyclic nucleotide-gated ion channel. This Arabidopsis thaliana (Mouse-ear cress) protein is Putative cyclic nucleotide-gated ion channel 13 (CNGC13).